We begin with the raw amino-acid sequence, 764 residues long: FHF complex subunit HOOK interacting protein 2A (764 aa).

Residues 190–236 are disordered; sequence SEDGPKGQDPGSGDVSQCQQPQELSGATGVEPTESEEEPPHQMDDLS. Residues 203 to 214 are compositionally biased toward polar residues; the sequence is DVSQCQQPQELS.

The protein belongs to the FHIP family.

Its function is as follows. May be required for proper functioning of the nervous system. This Mus musculus (Mouse) protein is FHF complex subunit HOOK interacting protein 2A.